The sequence spans 124 residues: MARLVGVDLPRDKRMEIALTYIYGVGRTRSNEILAATGIDRNLRTRDLTDDQLTHLRDYIEANLKIEGDLRREVQADIRRKIEIGCYQGLRHRRGLPVRGQRTKTNARTRKGPKRTIAGKKKAR.

The interval 95–124 is disordered; the sequence is GLPVRGQRTKTNARTRKGPKRTIAGKKKAR.

The protein belongs to the universal ribosomal protein uS13 family. In terms of assembly, part of the 30S ribosomal subunit. Forms a loose heterodimer with protein S19. Forms two bridges to the 50S subunit in the 70S ribosome.

In terms of biological role, located at the top of the head of the 30S subunit, it contacts several helices of the 16S rRNA. In the 70S ribosome it contacts the 23S rRNA (bridge B1a) and protein L5 of the 50S subunit (bridge B1b), connecting the 2 subunits; these bridges are implicated in subunit movement. Contacts the tRNAs in the A and P-sites. The protein is Small ribosomal subunit protein uS13 of Mycobacterium marinum (strain ATCC BAA-535 / M).